A 235-amino-acid chain; its full sequence is dITP/XTP pyrophosphatase (235 aa).

Ser7–Lys12 lines the substrate pocket. The active-site Proton acceptor is Asp70. Mg(2+) is bound at residue Asp70. Substrate-binding positions include Ser71, Phe180–Asp183, Lys211, and His216–Arg217.

The protein belongs to the HAM1 NTPase family. As to quaternary structure, homodimer. It depends on Mg(2+) as a cofactor.

It catalyses the reaction XTP + H2O = XMP + diphosphate + H(+). The enzyme catalyses dITP + H2O = dIMP + diphosphate + H(+). It carries out the reaction ITP + H2O = IMP + diphosphate + H(+). In terms of biological role, pyrophosphatase that catalyzes the hydrolysis of nucleoside triphosphates to their monophosphate derivatives, with a high preference for the non-canonical purine nucleotides XTP (xanthosine triphosphate), dITP (deoxyinosine triphosphate) and ITP. Seems to function as a house-cleaning enzyme that removes non-canonical purine nucleotides from the nucleotide pool, thus preventing their incorporation into DNA/RNA and avoiding chromosomal lesions. The chain is dITP/XTP pyrophosphatase from Anaeromyxobacter dehalogenans (strain 2CP-C).